Here is a 72-residue protein sequence, read N- to C-terminus: Mu-like prophage FluMu protein C (72 aa).

Residues 35–55 constitute a DNA-binding region (H-T-H motif); the sequence is NVPDLIKKYRLSESTIYAILR.

Belongs to the c/mor transcriptional regulatory family.

Required for transcription of the phage late genes. This chain is Mu-like prophage FluMu protein C, found in Haemophilus influenzae (strain ATCC 51907 / DSM 11121 / KW20 / Rd).